We begin with the raw amino-acid sequence, 275 residues long: 3-methyl-2-oxobutanoate hydroxymethyltransferase (275 aa).

Residues Asp44 and Asp83 each coordinate Mg(2+). Residues 44–45 (DS), Asp83, and Lys113 each bind 3-methyl-2-oxobutanoate. Residue Glu115 participates in Mg(2+) binding. Glu182 serves as the catalytic Proton acceptor.

Belongs to the PanB family. As to quaternary structure, homodecamer; pentamer of dimers. The cofactor is Mg(2+).

Its subcellular location is the cytoplasm. The catalysed reaction is 3-methyl-2-oxobutanoate + (6R)-5,10-methylene-5,6,7,8-tetrahydrofolate + H2O = 2-dehydropantoate + (6S)-5,6,7,8-tetrahydrofolate. It participates in cofactor biosynthesis; (R)-pantothenate biosynthesis; (R)-pantoate from 3-methyl-2-oxobutanoate: step 1/2. Its function is as follows. Catalyzes the reversible reaction in which hydroxymethyl group from 5,10-methylenetetrahydrofolate is transferred onto alpha-ketoisovalerate to form ketopantoate. This chain is 3-methyl-2-oxobutanoate hydroxymethyltransferase, found in Clostridium novyi (strain NT).